Here is an 886-residue protein sequence, read N- to C-terminus: Phosphatidylinositol 3-kinase catalytic subunit type 3 (886 aa).

The C2 PI3K-type domain maps to 35 to 184 (YKAVLEDPML…LAKLTKAHRQ (150 aa)). In terms of domain architecture, PIK helical spans 283–519 (DHDLKPNAAT…PKTHEMYLNV (237 aa)). Residues 414–464 (GLEPTKKDSQGPMLESMTTSGINPETDSSQILSNPLPAVSSPAPPSKTKDG) form a disordered region. A compositionally biased stretch (polar residues) spans 429 to 444 (SMTTSGINPETDSSQI). A compositionally biased stretch (low complexity) spans 445 to 454 (LSNPLPAVSS). Residues 604–870 (IPEKATLFKS…LIDDSVNALF (267 aa)) form the PI3K/PI4K catalytic domain. The G-loop stretch occupies residues 610-616 (LFKSALM). Residues 739 to 747 (GVGDRHLDN) form a catalytic loop region. The segment at 758 to 779 (HIDFGYILGRDPKPLPPPMKLN) is activation loop.

This sequence belongs to the PI3/PI4-kinase family. Component of the PI3K (PI3KC3/PI3K-III/class III phosphatidylinositol 3-kinase) complex the core of which is composed of the catalytic subunit pik3c3, the regulatory subunit pik3r4 and becn1 associating with additional regulatory/auxiliary subunits to form alternative complex forms. Mn(2+) is required as a cofactor.

It localises to the midbody. The enzyme catalyses a 1,2-diacyl-sn-glycero-3-phospho-(1D-myo-inositol) + ATP = a 1,2-diacyl-sn-glycero-3-phospho-(1D-myo-inositol-3-phosphate) + ADP + H(+). Functionally, catalytic subunit of the PI3K complex that mediates formation of phosphatidylinositol 3-phosphate; different complex forms are believed to play a role in multiple membrane trafficking pathways. Involved in the transport of lysosomal enzyme precursors to lysosomes. Required for transport from early to late endosomes. The polypeptide is Phosphatidylinositol 3-kinase catalytic subunit type 3 (pik3c3) (Xenopus laevis (African clawed frog)).